The chain runs to 499 residues: Putative protease Do-like 12, mitochondrial (499 aa).

Residues M1 to S24 constitute a mitochondrion transit peptide. The tract at residues G94–I259 is serine protease. Residues H110, D144, and S222 each act as charge relay system in the active site. The PDZ domain occupies G272 to R356.

This sequence belongs to the peptidase S1C family.

The protein resides in the mitochondrion matrix. Functionally, putative serine protease. This chain is Putative protease Do-like 12, mitochondrial (DEGP12), found in Arabidopsis thaliana (Mouse-ear cress).